A 327-amino-acid polypeptide reads, in one-letter code: DNA-directed RNA polymerase subunit alpha (327 aa).

Positions 1-227 are alpha N-terminal domain (alpha-NTD); sequence MLIAHRPTLI…ELFGLARELN (227 aa). Positions 244 to 327 are alpha C-terminal domain (alpha-CTD); that stretch reads SDEDLRIPIE…GSYFDPNYGS (84 aa).

It belongs to the RNA polymerase alpha chain family. As to quaternary structure, homodimer. The RNAP catalytic core consists of 2 alpha, 1 beta, 1 beta' and 1 omega subunit. When a sigma factor is associated with the core the holoenzyme is formed, which can initiate transcription.

The catalysed reaction is RNA(n) + a ribonucleoside 5'-triphosphate = RNA(n+1) + diphosphate. Its function is as follows. DNA-dependent RNA polymerase catalyzes the transcription of DNA into RNA using the four ribonucleoside triphosphates as substrates. This chain is DNA-directed RNA polymerase subunit alpha, found in Tropheryma whipplei (strain TW08/27) (Whipple's bacillus).